The following is a 313-amino-acid chain: Fucose-specific lectin (313 aa).

Tandem repeats lie at residues 5–57, 58–109, 110–162, 163–208, 209–260, and 261–304. The interval 5–304 is 6 X approximate tandem repeats; it reads FLYTSKIAAI…SGKGWSIGAV (300 aa). Residues Arg25, Glu37, Arg78, Glu90, Trp98, Gln102, Arg132, Glu147, and Trp154 each coordinate beta-L-fucose. Positions 78 and 90 each coordinate alpha-L-fucose. Gln102 contacts alpha-L-fucose. Residues Trp154, Arg180, and Glu192 each coordinate alpha-L-fucose. Trp200 contacts beta-L-fucose. Residue Gly204 coordinates alpha-L-fucose. Residues Arg227 and Glu239 each contribute to the beta-L-fucose site. Trp246 serves as a coordination point for alpha-L-fucose. Trp299 is a beta-L-fucose binding site.

It belongs to the fungal fucose-specific lectin family. In terms of assembly, forms homodimers. The two AAL monomers are associated via interactions between N-terminal and C-terminal peptides. Tyr-7 interacts via aromatic ring stacking with its counterpart on the other monomer, whereas Ser-284 interacts via hydrogen bonding with Asp-264 on the other monomer.

In terms of biological role, lectin that specifically binds to L-fucose. Has strongest preference for the alpha-1,6-fucosylated chain (core fucose) on glycoproteins among alpha-1,2-, alpha-1,3-, alpha-1,4-, and alpha-1,6-fucosylated chains. Might play a role in the differentiation of the fruiting body. Exhibits antifungal activity against Mucor racemosus and thus could act as an antifungal protein in natural ecosystems. The sequence is that of Fucose-specific lectin from Aleuria aurantia (Orange peel mushroom).